The chain runs to 336 residues: MAASLRLRGAASGLRYWSRRQPPAVASLAAVCSRSMASKTPVGFIGVGNMGNPMAKNLMKHGYPLIIYDVFPDACKEFLDAGEQVVSSPADVAEKADRIITMLPTSINAIEAYSGANGILKKVKKGSLLIDSSTIDPMVSKELAKEVEKMGAVFMDAPVSGGVGAARSGNLTFMVGGVEEEFAAAQELLGCMGSNVVYCGAVGTGQAAKICNNLLLAISMIGTAEAMNLGIRLGLDPKLLAKILNMSSGRCWSSDTYNPVPGVMDGVPSANNYQGGFGTTLMAKDLGLAQDSATSTKSPILLGSQAHQIYRMMCAKGYSKKDFSSVFQFLREEETF.

A mitochondrion-targeting transit peptide spans 1–36; the sequence is MAASLRLRGAASGLRYWSRRQPPAVASLAAVCSRSM. An NAD(+)-binding site is contributed by 40 to 69; that stretch reads TPVGFIGVGNMGNPMAKNLMKHGYPLIIYD. An N6-acetyllysine; alternate mark is found at Lys60 and Lys76. 2 positions are modified to N6-succinyllysine; alternate: Lys60 and Lys76. Lys95 carries the N6-succinyllysine modification. NAD(+) contacts are provided by residues 103–104 and Asn108; that span reads LP. An N6-acetyllysine modification is found at Lys121. Residue Thr134 participates in NAD(+) binding. Lys141 carries the N6-succinyllysine modification. Lys145 bears the N6-acetyllysine mark. The residue at position 149 (Lys149) is an N6-acetyllysine; alternate. Lys149 carries the post-translational modification N6-succinyllysine; alternate. Residue Lys209 is part of the active site. 2 positions are modified to N6-acetyllysine; alternate: Lys238 and Lys242. An N6-succinyllysine; alternate mark is found at Lys238 and Lys242. Lys284 is an NAD(+) binding site. An N6-succinyllysine modification is found at Lys297. Lys321 carries the N6-acetyllysine; alternate modification. Residue Lys321 is modified to N6-succinyllysine; alternate.

Belongs to the HIBADH-related family. 3-hydroxyisobutyrate dehydrogenase subfamily. As to quaternary structure, homodimer.

The protein resides in the mitochondrion. It carries out the reaction 3-hydroxy-2-methylpropanoate + NAD(+) = 2-methyl-3-oxopropanoate + NADH + H(+). Its pathway is amino-acid degradation; L-valine degradation. The polypeptide is 3-hydroxyisobutyrate dehydrogenase, mitochondrial (HIBADH) (Bos taurus (Bovine)).